Reading from the N-terminus, the 215-residue chain is Adenylate kinase (215 aa).

10–15 (GAGKGT) lines the ATP pocket. The NMP stretch occupies residues 30–59 (STGDILRANVREGTELGLAAKAYMDKGELV). Residues Thr31, Arg36, 57–59 (ELV), 85–88 (GYPR), and Gln92 each bind AMP. The tract at residues 126 to 162 (GRLMCKCGASYHTIANPPKKDNICDICGGEVYQRDDD) is LID. Arg127 lines the ATP pocket. Cys130 and Cys132 together coordinate Zn(2+). 135 to 136 (SY) is a binding site for ATP. The Zn(2+) site is built by Cys149 and Cys152. 2 residues coordinate AMP: Arg159 and Arg170. Position 198 (Lys198) interacts with ATP.

Belongs to the adenylate kinase family. In terms of assembly, monomer.

Its subcellular location is the cytoplasm. The catalysed reaction is AMP + ATP = 2 ADP. The protein operates within purine metabolism; AMP biosynthesis via salvage pathway; AMP from ADP: step 1/1. In terms of biological role, catalyzes the reversible transfer of the terminal phosphate group between ATP and AMP. Plays an important role in cellular energy homeostasis and in adenine nucleotide metabolism. This Methanosarcina mazei (strain ATCC BAA-159 / DSM 3647 / Goe1 / Go1 / JCM 11833 / OCM 88) (Methanosarcina frisia) protein is Adenylate kinase.